Here is a 515-residue protein sequence, read N- to C-terminus: 2,3-bisphosphoglycerate-independent phosphoglycerate mutase 1 (515 aa).

Mn(2+) contacts are provided by D14 and S64. S64 acts as the Phosphoserine intermediate in catalysis. Residues H125, 155-156 (RD), R187, R193, 264-267 (RADR), and K337 each bind substrate. Residues D404, H408, D445, H446, and H464 each contribute to the Mn(2+) site.

It belongs to the BPG-independent phosphoglycerate mutase family. The cofactor is Mn(2+).

The catalysed reaction is (2R)-2-phosphoglycerate = (2R)-3-phosphoglycerate. It participates in carbohydrate degradation; glycolysis; pyruvate from D-glyceraldehyde 3-phosphate: step 3/5. Functionally, catalyzes the interconversion of 2-phosphoglycerate and 3-phosphoglycerate. The protein is 2,3-bisphosphoglycerate-independent phosphoglycerate mutase 1 of Methanosarcina acetivorans (strain ATCC 35395 / DSM 2834 / JCM 12185 / C2A).